A 535-amino-acid polypeptide reads, in one-letter code: Succinate-semialdehyde dehydrogenase, mitochondrial (535 aa).

The transit peptide at 1–47 (MATCIWLRSCGARRLGWTFPGCRLRPRAGGLVPASGPAPGPAQLRCY) directs the protein to the mitochondrion. Lysine 126 is subject to N6-acetyllysine; alternate. An N6-succinyllysine; alternate modification is found at lysine 126. 2 positions are modified to N6-succinyllysine: lysine 135 and lysine 184. NAD(+) is bound by residues arginine 213 and 228–231 (KPAE). Arginine 213 contacts substrate. Lysine 265 bears the N6-acetyllysine; alternate mark. Lysine 265 is modified (N6-succinyllysine; alternate). 284–289 (GSTTTG) provides a ligand contact to NAD(+). Glutamate 306 acts as the Proton acceptor in catalysis. Arginine 334 contacts substrate. The Nucleophile role is filled by cysteine 340. A disulfide bridge connects residues cysteine 340 and cysteine 342. Lysine 365 carries the N6-acetyllysine modification. Residue lysine 402 is modified to N6-succinyllysine. Lysine 411 bears the N6-acetyllysine mark. Position 498 (serine 498) interacts with substrate. Serine 499 is subject to Phosphoserine.

The protein belongs to the aldehyde dehydrogenase family. As to quaternary structure, homotetramer.

Its subcellular location is the mitochondrion. The catalysed reaction is succinate semialdehyde + NAD(+) + H2O = succinate + NADH + 2 H(+). It participates in amino-acid degradation; 4-aminobutanoate degradation. Its activity is regulated as follows. Redox-regulated. Inhibited under oxydizing conditions. Its function is as follows. Catalyzes one step in the degradation of the inhibitory neurotransmitter gamma-aminobutyric acid (GABA). The chain is Succinate-semialdehyde dehydrogenase, mitochondrial (ALDH5A1) from Pan paniscus (Pygmy chimpanzee).